Reading from the N-terminus, the 154-residue chain is Putative F-box protein At2g11200 (154 aa).

The F-box domain occupies 5-51 (TTAMSDLPRDLEEEVLSRVQLASLRAVRTTCKKWNRRLSKYRFTKKY).

In Arabidopsis thaliana (Mouse-ear cress), this protein is Putative F-box protein At2g11200.